Consider the following 468-residue polypeptide: ATP synthase subunit beta (468 aa).

155–162 (GGAGVGKT) contributes to the ATP binding site.

It belongs to the ATPase alpha/beta chains family. As to quaternary structure, F-type ATPases have 2 components, CF(1) - the catalytic core - and CF(0) - the membrane proton channel. CF(1) has five subunits: alpha(3), beta(3), gamma(1), delta(1), epsilon(1). CF(0) has three main subunits: a(1), b(2) and c(9-12). The alpha and beta chains form an alternating ring which encloses part of the gamma chain. CF(1) is attached to CF(0) by a central stalk formed by the gamma and epsilon chains, while a peripheral stalk is formed by the delta and b chains.

It is found in the cell membrane. The enzyme catalyses ATP + H2O + 4 H(+)(in) = ADP + phosphate + 5 H(+)(out). Its function is as follows. Produces ATP from ADP in the presence of a proton gradient across the membrane. The catalytic sites are hosted primarily by the beta subunits. The protein is ATP synthase subunit beta of Enterococcus hirae (strain ATCC 9790 / DSM 20160 / JCM 8729 / LMG 6399 / NBRC 3181 / NCIMB 6459 / NCDO 1258 / NCTC 12367 / WDCM 00089 / R).